A 433-amino-acid chain; its full sequence is Enolase (433 aa).

Glutamine 163 is a binding site for (2R)-2-phosphoglycerate. Catalysis depends on glutamate 205, which acts as the Proton donor. Mg(2+) contacts are provided by aspartate 241, glutamate 289, and aspartate 316. Residues lysine 341, arginine 370, serine 371, and lysine 392 each coordinate (2R)-2-phosphoglycerate. The active-site Proton acceptor is the lysine 341.

Belongs to the enolase family. Requires Mg(2+) as cofactor.

The protein localises to the cytoplasm. The protein resides in the secreted. It is found in the cell surface. The enzyme catalyses (2R)-2-phosphoglycerate = phosphoenolpyruvate + H2O. The protein operates within carbohydrate degradation; glycolysis; pyruvate from D-glyceraldehyde 3-phosphate: step 4/5. Its function is as follows. Catalyzes the reversible conversion of 2-phosphoglycerate (2-PG) into phosphoenolpyruvate (PEP). It is essential for the degradation of carbohydrates via glycolysis. The protein is Enolase of Treponema denticola (strain ATCC 35405 / DSM 14222 / CIP 103919 / JCM 8153 / KCTC 15104).